The primary structure comprises 277 residues: 3-methyl-2-oxobutanoate hydroxymethyltransferase (277 aa).

Mg(2+)-binding residues include Asp-43 and Asp-82. 3-methyl-2-oxobutanoate contacts are provided by residues Asp-43–Ser-44, Asp-82, and Lys-112. Glu-114 is a Mg(2+) binding site. Catalysis depends on Glu-181, which acts as the Proton acceptor.

The protein belongs to the PanB family. In terms of assembly, homodecamer; pentamer of dimers. It depends on Mg(2+) as a cofactor.

The protein resides in the cytoplasm. It carries out the reaction 3-methyl-2-oxobutanoate + (6R)-5,10-methylene-5,6,7,8-tetrahydrofolate + H2O = 2-dehydropantoate + (6S)-5,6,7,8-tetrahydrofolate. It participates in cofactor biosynthesis; (R)-pantothenate biosynthesis; (R)-pantoate from 3-methyl-2-oxobutanoate: step 1/2. In terms of biological role, catalyzes the reversible reaction in which hydroxymethyl group from 5,10-methylenetetrahydrofolate is transferred onto alpha-ketoisovalerate to form ketopantoate. This chain is 3-methyl-2-oxobutanoate hydroxymethyltransferase, found in Exiguobacterium sp. (strain ATCC BAA-1283 / AT1b).